An 832-amino-acid chain; its full sequence is MATGYSTGVSPFDLDENNHNDSIHHRHQNHHSQSHDSSGERDDTEIEDIIQKTSKLNINTSTSTKIKNFFFQSSNRHDSSNSPPLREVFIKTINPLILTAISSFVRLYRIDVANSVVWDEAHFGKFGSQYLKRQFYFDVHPPLGKLLIGLSGYLADYDGNFDFESSNVYPDNVNYVFMRIFNCFFGILVTPLAYKTAVILGYNQFTCWLIAFMVIFEQLSLTLSKFILLDSMLLFFTVLTMYCLVKVHTLAIARVGSNSKTPLTKLEIKWYILTGISIGCVCSVKWVGLFVTALVGFYTIVDLWIKFYQTFAIDKKSPKKMSVVNYLIHWVVRIFTLIIIPMTIYVATFKVHFMVLNHTGPDDGTLSTLLQGSLIGNDLQSGPRSVAFGSLVTIRSQGLSPNLIHSHPHNYPQGSQEQQVTTYGFKDDNNEFLFEFGVDAGLRNQHATLENENSTRNGGNDDDYYHVIIHDGDTVRINHKNTGSYLRANAVGAPITSSSYEVSCFGDVESNDWADEWVIEIQSQDQSPDPMFQDEDPSEIHSVSTSFRLKHKQLGCYLATTGKSYPAWGYQQGEVVCKYSVFSRDKNTWWNIEKHVNNKLPLPATEYVPPKPKFWKEFILLNYAMMASNNALIPDPDRFDKLSSEWWEWPILNTGLRMNSWGDADIKYFLLGNPLITWISTIALIVCPLYLLVVGIKYQRQWILLSATDTSNANPANSQSLSLLAARALLPLAGWVLHYVPFILMGRVKYLHHYVPALYFAIFVAGFIVDAILNLDFSYHNNKFQYIFKVVIYSTLYLVICISFWYFKDLSFGMEGSSVDYRHLRLLGSWMI.

The interval 1–44 is disordered; sequence MATGYSTGVSPFDLDENNHNDSIHHRHQNHHSQSHDSSGERDDT. N-linked (GlcNAc...) asparagine glycans are attached at residues Asn20 and Asn59. Helical transmembrane passes span 135–155, 175–194, 206–227, 232–252, 266–286, 293–311, and 327–347; these read FYFDVHPPLGKLLIGLSGYLA, YVFMRIFNCFFGILVTPLAY, TCWLIAFMVIFEQLSLTLSKFI, MLLFFTVLTMYCLVKVHTLAI, LEIKWYILTGISIGCVCSVKW, ALVGFYTIVDLWIKFYQTF, and LIHWVVRIFTLIIIPMTIYVA. N-linked (GlcNAc...) asparagine glycosylation occurs at Asn357. Residues 383 to 437 form the MIR 1 domain; the sequence is PRSVAFGSLVTIRSQGLSPNLIHSHPHNYPQGSQEQQVTTYGFKDDNNEFLFEFG. Asn453 carries an N-linked (GlcNAc...) asparagine glycan. 2 MIR domains span residues 466 to 522 and 537 to 595; these read HVII…IEIQ and PSEI…IEKH. Helical transmembrane passes span 676-696, 723-743, 755-775, and 787-807; these read ITWISTIALIVCPLYLLVVGI, LLAARALLPLAGWVLHYVPFI, VPALYFAIFVAGFIVDAILNL, and IFKVVIYSTLYLVICISFWYF.

It belongs to the glycosyltransferase 39 family.

It localises to the endoplasmic reticulum membrane. The enzyme catalyses a di-trans,poly-cis-dolichyl beta-D-mannosyl phosphate + L-seryl-[protein] = 3-O-(alpha-D-mannosyl)-L-seryl-[protein] + a di-trans,poly-cis-dolichyl phosphate + H(+). It catalyses the reaction a di-trans,poly-cis-dolichyl beta-D-mannosyl phosphate + L-threonyl-[protein] = 3-O-(alpha-D-mannosyl)-L-threonyl-[protein] + a di-trans,poly-cis-dolichyl phosphate + H(+). It participates in protein modification; protein glycosylation. Protein mannosyltransferase (PMT) involved in hyphal morphogenesis and drug sensitivity. Transfers mannose from Dol-P-mannose to Ser or Thr residues on proteins. PMT1, PMT2 and PMT4 account for most of the protein-O-glycosylation activity, while PMT5 and PMT6 may specifically modulate a much narrower spectrum of target proteins. Required for biofilm formation and virulence. This is Dolichyl-phosphate-mannose--protein mannosyltransferase 6 (PMT6) from Candida albicans (strain SC5314 / ATCC MYA-2876) (Yeast).